Consider the following 115-residue polypeptide: MKKKHRIKKNDEFQAVFQKGKSNANRQFVVYQLDKEEQPNFRIGLSVSKKIGNAVVRNRIKRMVRQAITELKDEIASGKDFVIIARKPCAEMTYEEVKKSLIHVFKRSGMKRIKK.

Belongs to the RnpA family. As to quaternary structure, consists of a catalytic RNA component (M1 or rnpB) and a protein subunit.

It catalyses the reaction Endonucleolytic cleavage of RNA, removing 5'-extranucleotides from tRNA precursor.. Its function is as follows. RNaseP catalyzes the removal of the 5'-leader sequence from pre-tRNA to produce the mature 5'-terminus. It can also cleave other RNA substrates such as 4.5S RNA. The protein component plays an auxiliary but essential role in vivo by binding to the 5'-leader sequence and broadening the substrate specificity of the ribozyme. The protein is Ribonuclease P protein component of Bacillus cereus (strain B4264).